Here is a 1349-residue protein sequence, read N- to C-terminus: Patatin-like phospholipase domain-containing protein 7 (1349 aa).

Topologically, residues 1–36 are lumenal; it reads MQKEEDVCPEAGYCLGTALSSWGLHFMEEHSQSTML. Residues 37–57 form a helical membrane-spanning segment; the sequence is MGIGIGVLLTLAFVGLAAFFV. The Cytoplasmic portion of the chain corresponds to 58–1349; sequence YRKVSRFRRA…DQGPRLYRPS (1292 aa). 170-297 contacts a nucleoside 3',5'-cyclic phosphate; sequence VLGHFEKPLF…VRVVQIIMVR (128 aa). The tract at residues 340 to 361 is disordered; that stretch reads MSYGPEEQLERSPRLSEFNSSD. Phosphoserine is present on residues S341 and S377. A nucleoside 3',5'-cyclic phosphate-binding positions include 496–599 and 610–715; these read FLHV…VVRR and ALDW…LGEK. Residues 678 to 964 are involved in the binding to lipid droplets; that stretch reads VHAVRDSELA…RGCAQVGILR (287 aa). The PNPLA domain maps to 947–1113; sequence LVLGGGGARG…INNLPADVAR (167 aa). A GXGXXG motif is present at residues 951 to 956; sequence GGGARG. Positions 978–982 match the GXSXG motif; sequence GTSIG. S980 functions as the Nucleophile in the catalytic mechanism. Catalysis depends on D1100, which acts as the Proton acceptor. A DGA/G motif is present at residues 1100 to 1102; it reads DGG. S1277 is subject to Phosphoserine. The residue at position 1281 (T1281) is a Phosphothreonine. The segment at 1297 to 1349 is disordered; sequence DFQSTGIELDSDSECEPSMSQGPHSLTSPKQSQDSFPWLPNQDDQGPRLYRPS. The span at 1314–1331 shows a compositional bias: polar residues; the sequence is SMSQGPHSLTSPKQSQDS.

This sequence belongs to the NTE family. Expressed in the brain, liver, kidney, lung and testis.

It is found in the endoplasmic reticulum membrane. The protein resides in the lipid droplet. It carries out the reaction a 1-acyl-sn-glycero-3-phosphocholine + H2O = sn-glycerol 3-phosphocholine + a fatty acid + H(+). It catalyses the reaction 1-(9Z-octadecenoyl)-sn-glycero-3-phosphocholine + H2O = sn-glycerol 3-phosphocholine + (9Z)-octadecenoate + H(+). The enzyme catalyses 1-(9Z-octadecenoyl)-sn-glycero-3-phosphoethanolamine + H2O = sn-glycero-3-phosphoethanolamine + (9Z)-octadecenoate + H(+). The catalysed reaction is 1-(9Z-octadecenoyl)-sn-glycero-3-phospho-L-serine + H2O = sn-glycero-3-phospho-L-serine + (9Z)-octadecenoate + H(+). It carries out the reaction 1-hexadecanoyl-sn-glycero-3-phosphocholine + H2O = sn-glycerol 3-phosphocholine + hexadecanoate + H(+). It catalyses the reaction 1-hexadecanoyl-sn-glycero-3-phosphate + H2O = sn-glycerol 3-phosphate + hexadecanoate + H(+). Functionally, lysophospholipase which preferentially deacylates unsaturated lysophosphatidylcholine (C18:1), generating glycerophosphocholine. Also can deacylate, to a lesser extent, lysophosphatidylethanolamine (C18:1), lysophosphatidyl-L-serine (C18:1) and lysophosphatidic acid (C16:0). The chain is Patatin-like phospholipase domain-containing protein 7 (Pnpla7) from Rattus norvegicus (Rat).